A 574-amino-acid polypeptide reads, in one-letter code: DNA-directed primase/polymerase protein (574 aa).

The stretch at 2–22 forms a coiled coil; the sequence is KRKWEERVKKVEELASYYERN. Substrate is bound by residues R76, 116 to 118, 167 to 171, 291 to 294, and K300; these read DLE, KFSRH, and RNFR. 2 residues coordinate Mn(2+): D116 and E118. C424, H431, C451, and C456 together coordinate Zn(2+). The Zinc knuckle motif motif lies at 424 to 457; that stretch reads CENIGRAHRSNNIMILVDLKKEVWYQKCHDPVCR.

Belongs to the eukaryotic-type primase small subunit family. Requires Mn(2+) as cofactor.

It localises to the nucleus. It is found in the mitochondrion matrix. The protein resides in the chromosome. It carries out the reaction ssDNA + n NTP = ssDNA/pppN(pN)n-1 hybrid + (n-1) diphosphate.. The catalysed reaction is DNA(n) + a 2'-deoxyribonucleoside 5'-triphosphate = DNA(n+1) + diphosphate. Its function is as follows. DNA primase and DNA polymerase required to tolerate replication-stalling lesions by bypassing them. Required to facilitate mitochondrial and nuclear replication fork progression by initiating de novo DNA synthesis using dNTPs and acting as an error-prone DNA polymerase able to bypass certain DNA lesions. Shows a high capacity to tolerate DNA damage lesions such as 8oxoG and abasic sites in DNA. Provides different translesion synthesis alternatives when DNA replication is stalled: able to synthesize DNA primers downstream of lesions, such as UV lesions, R-loops and G-quadruplexes, to allow DNA replication to continue. Can also realign primers ahead of 'unreadable lesions' such as abasic sites and 6-4 photoproduct (6-4 pyrimidine-pyrimidinone), thereby skipping the lesion. Repriming avoids fork degradation while leading to accumulation of internal ssDNA gaps behind the forks. Also able to incorporate nucleotides opposite DNA lesions such as 8oxoG, like a regular translesion synthesis DNA polymerase. Also required for reinitiating stalled forks after ultraviolet (UV) damage during nuclear DNA replication. Required for mitochondrial DNA (mtDNA) synthesis and replication, by reinitiating synthesis after UV damage or in the presence of chain-terminating nucleotides. In addition to its role in DNA damage response, also required to maintain efficient nuclear and mitochondrial DNA replication in unperturbed cells. The polypeptide is DNA-directed primase/polymerase protein (Gallus gallus (Chicken)).